Consider the following 100-residue polypeptide: Large ribosomal subunit protein uL23 (100 aa).

Belongs to the universal ribosomal protein uL23 family. Part of the 50S ribosomal subunit. Contacts protein L29, and trigger factor when it is bound to the ribosome.

In terms of biological role, one of the early assembly proteins it binds 23S rRNA. One of the proteins that surrounds the polypeptide exit tunnel on the outside of the ribosome. Forms the main docking site for trigger factor binding to the ribosome. The polypeptide is Large ribosomal subunit protein uL23 (Mycolicibacterium smegmatis (strain ATCC 700084 / mc(2)155) (Mycobacterium smegmatis)).